The primary structure comprises 386 residues: Succinate--CoA ligase [ADP-forming] subunit beta (386 aa).

The ATP-grasp domain occupies 9 to 244 (KEILHKFNVP…YDEEVKEEIE (236 aa)). Residues lysine 46, 53-55 (GRG), glutamate 99, serine 102, and glutamate 107 each bind ATP. Mg(2+)-binding residues include asparagine 199 and aspartate 213. Residues asparagine 264 and 321-323 (GIM) contribute to the substrate site.

Belongs to the succinate/malate CoA ligase beta subunit family. As to quaternary structure, heterotetramer of two alpha and two beta subunits. Requires Mg(2+) as cofactor.

The enzyme catalyses succinate + ATP + CoA = succinyl-CoA + ADP + phosphate. The catalysed reaction is GTP + succinate + CoA = succinyl-CoA + GDP + phosphate. It participates in carbohydrate metabolism; tricarboxylic acid cycle; succinate from succinyl-CoA (ligase route): step 1/1. Functionally, succinyl-CoA synthetase functions in the citric acid cycle (TCA), coupling the hydrolysis of succinyl-CoA to the synthesis of either ATP or GTP and thus represents the only step of substrate-level phosphorylation in the TCA. The beta subunit provides nucleotide specificity of the enzyme and binds the substrate succinate, while the binding sites for coenzyme A and phosphate are found in the alpha subunit. The protein is Succinate--CoA ligase [ADP-forming] subunit beta of Wolbachia pipientis subsp. Culex pipiens (strain wPip).